Here is a 76-residue protein sequence, read N- to C-terminus: MLFESISTLSNLKSASKSSMIASTGSTSSKSSNSIQCYTGCVGGGIFPIRQTSINIDINISISRGCGSCGGCACRY.

Residues 1–13 (MLFESISTLSNLK) are compositionally biased toward polar residues. Positions 1–33 (MLFESISTLSNLKSASKSSMIASTGSTSSKSSN) are disordered. Over residues 14 to 33 (SASKSSMIASTGSTSSKSSN) the composition is skewed to low complexity.

The protein is Protein sigN132 of Dictyostelium discoideum (Social amoeba).